Consider the following 59-residue polypeptide: Potassium channel toxin alpha-KTx 3.10 (59 aa).

Positions 1–22 (MKVFFAVLIALFVCSMVIGIHG) are cleaved as a signal peptide. 3 disulfide bridges follow: Cys30-Cys50, Cys36-Cys55, and Cys40-Cys57.

The protein belongs to the short scorpion toxin superfamily. Potassium channel inhibitor family. Alpha-KTx 03 subfamily. Expressed by the venom gland.

It localises to the secreted. Inhibits insect potassium channel. Is at least a 100-fold more potent against the Drosophila Shaker channel than towards its mammalian homologs Kv1.1/KCNA1 and Kv1.3/KCNA3. The protein is Potassium channel toxin alpha-KTx 3.10 of Buthus israelis (Israeli scorpion).